We begin with the raw amino-acid sequence, 387 residues long: Sedoheptulose-1,7-bisphosphatase, chloroplastic (387 aa).

Residues C109 and C114 are joined by a disulfide bond. Mg(2+) is bound by residues D120, E149, D170, L172, and D173. Substrate is bound by residues 173 to 176, Y284, and K314; that span reads DGSS. A Mg(2+)-binding site is contributed by E320.

The protein belongs to the FBPase class 1 family. In terms of assembly, homodimer. It depends on Mg(2+) as a cofactor.

The protein localises to the plastid. Its subcellular location is the chloroplast. The enzyme catalyses D-sedoheptulose 1,7-bisphosphate + H2O = D-sedoheptulose 7-phosphate + phosphate. It functions in the pathway carbohydrate biosynthesis; Calvin cycle. This chain is Sedoheptulose-1,7-bisphosphatase, chloroplastic, found in Spinacia oleracea (Spinach).